A 350-amino-acid polypeptide reads, in one-letter code: DNA polymerase IV (350 aa).

A UmuC domain is found at 6 to 187 (IIHIDMDAFY…LPVEKIFGIG (182 aa)). Mg(2+) is bound by residues Asp-10 and Asp-105. The active site involves Glu-106.

It belongs to the DNA polymerase type-Y family. As to quaternary structure, monomer. It depends on Mg(2+) as a cofactor.

Its subcellular location is the cytoplasm. The enzyme catalyses DNA(n) + a 2'-deoxyribonucleoside 5'-triphosphate = DNA(n+1) + diphosphate. In terms of biological role, poorly processive, error-prone DNA polymerase involved in untargeted mutagenesis. Copies undamaged DNA at stalled replication forks, which arise in vivo from mismatched or misaligned primer ends. These misaligned primers can be extended by PolIV. Exhibits no 3'-5' exonuclease (proofreading) activity. May be involved in translesional synthesis, in conjunction with the beta clamp from PolIII. The protein is DNA polymerase IV of Protochlamydia amoebophila (strain UWE25).